The primary structure comprises 162 residues: Endoribonuclease YbeY (162 aa).

Positions 117, 121, and 127 each coordinate Zn(2+).

The protein belongs to the endoribonuclease YbeY family. Zn(2+) is required as a cofactor.

The protein resides in the cytoplasm. Single strand-specific metallo-endoribonuclease involved in late-stage 70S ribosome quality control and in maturation of the 3' terminus of the 16S rRNA. The sequence is that of Endoribonuclease YbeY from Francisella tularensis subsp. mediasiatica (strain FSC147).